The primary structure comprises 108 residues: Insulin (108 aa).

The N-terminal stretch at methionine 1–alanine 24 is a signal peptide. Intrachain disulfides connect cysteine 31–cysteine 94, cysteine 43–cysteine 107, and cysteine 93–cysteine 98. Positions glutamate 57 to glutamine 85 are cleaved as a propeptide — c peptide.

It belongs to the insulin family. As to quaternary structure, heterodimer of a B chain and an A chain linked by two disulfide bonds.

The protein localises to the secreted. Insulin decreases blood glucose concentration. It increases cell permeability to monosaccharides, amino acids and fatty acids. It accelerates glycolysis, the pentose phosphate cycle, and glycogen synthesis in liver. This Aotus trivirgatus (Three-striped night monkey) protein is Insulin (INS).